Here is a 384-residue protein sequence, read N- to C-terminus: Spermidine/putrescine import ATP-binding protein PotA (384 aa).

One can recognise an ABC transporter domain in the interval 6-238; that stretch reads IAFKNVSKVF…PINHFVATFI (233 aa). 40-47 contributes to the ATP binding site; that stretch reads GASGSGKS.

This sequence belongs to the ABC transporter superfamily. Spermidine/putrescine importer (TC 3.A.1.11.1) family. As to quaternary structure, the complex is composed of two ATP-binding proteins (PotA), two transmembrane proteins (PotB and PotC) and a solute-binding protein (PotD).

It is found in the cell membrane. The catalysed reaction is ATP + H2O + polyamine-[polyamine-binding protein]Side 1 = ADP + phosphate + polyamineSide 2 + [polyamine-binding protein]Side 1.. Its function is as follows. Part of the ABC transporter complex PotABCD involved in spermidine/putrescine import. Responsible for energy coupling to the transport system. The chain is Spermidine/putrescine import ATP-binding protein PotA from Streptococcus agalactiae serotype Ia (strain ATCC 27591 / A909 / CDC SS700).